A 352-amino-acid chain; its full sequence is Fatty acid synthase (352 aa).

Residues 1–352 (MEDVVIAGIA…KVVLSLEHGL (352 aa)) form the Ketosynthase family 3 (KS3) domain. Active-site for beta-ketoacyl synthase activity residues include C161, H293, and H331.

As to quaternary structure, homodimer which monomers are arranged in a head to tail fashion.

The catalysed reaction is acetyl-CoA + n malonyl-CoA + 2n NADPH + 2n H(+) = a long-chain fatty acid + (n+1) CoA + n CO2 + 2n NADP(+).. Its function is as follows. Fatty acid synthetase catalyzes the formation of long-chain fatty acids from acetyl-CoA, malonyl-CoA and NADPH. This multifunctional protein has 7 catalytic activities as an acyl carrier protein. The polypeptide is Fatty acid synthase (FASN) (Anser anser anser (Western greylag goose)).